A 349-amino-acid chain; its full sequence is Protein-glutamate methylesterase/protein-glutamine glutaminase 3 (349 aa).

The region spanning 2–119 is the Response regulatory domain; that stretch reads DVLIVDDSPV…HPDFERDVES (118 aa). Position 52 is a 4-aspartylphosphate (D52). Residues 157-340 enclose the CheB-type methylesterase domain; it reads EGFQPGVIAI…LSPPRIAALL (184 aa). Active-site residues include S169, H196, and D289.

It belongs to the CheB family. In terms of processing, phosphorylated by CheA. Phosphorylation of the N-terminal regulatory domain activates the methylesterase activity.

Its subcellular location is the cytoplasm. The catalysed reaction is [protein]-L-glutamate 5-O-methyl ester + H2O = L-glutamyl-[protein] + methanol + H(+). It catalyses the reaction L-glutaminyl-[protein] + H2O = L-glutamyl-[protein] + NH4(+). Functionally, involved in chemotaxis. Part of a chemotaxis signal transduction system that modulates chemotaxis in response to various stimuli. Catalyzes the demethylation of specific methylglutamate residues introduced into the chemoreceptors (methyl-accepting chemotaxis proteins or MCP) by CheR. Also mediates the irreversible deamidation of specific glutamine residues to glutamic acid. The polypeptide is Protein-glutamate methylesterase/protein-glutamine glutaminase 3 (Hahella chejuensis (strain KCTC 2396)).